We begin with the raw amino-acid sequence, 233 residues long: Orotidine 5'-phosphate decarboxylase (233 aa).

Residues aspartate 11, lysine 34, aspartate 61–threonine 70, threonine 117, arginine 179, glutamine 188, glycine 208, and arginine 209 contribute to the substrate site. Lysine 63 serves as the catalytic Proton donor.

The protein belongs to the OMP decarboxylase family. Type 1 subfamily. Homodimer.

It catalyses the reaction orotidine 5'-phosphate + H(+) = UMP + CO2. It functions in the pathway pyrimidine metabolism; UMP biosynthesis via de novo pathway; UMP from orotate: step 2/2. In terms of biological role, catalyzes the decarboxylation of orotidine 5'-monophosphate (OMP) to uridine 5'-monophosphate (UMP). The protein is Orotidine 5'-phosphate decarboxylase of Streptococcus pneumoniae (strain JJA).